The primary structure comprises 458 residues: 5-hydroxytryptamine receptor 2C (458 aa).

The N-terminal stretch at methionine 1–alanine 32 is a signal peptide. Topologically, residues isoleucine 33–tryptophan 55 are extracellular. A helical membrane pass occupies residues proline 56–methionine 80. At glutamate 81–asparagine 86 the chain is on the cytoplasmic side. A helical membrane pass occupies residues alanine 87–leucine 111. At leucine 112–proline 128 the chain is on the extracellular side. A disulfide bridge links cysteine 127 with cysteine 207. Residues valine 129 to aspartate 151 form a helical membrane-spanning segment. Threonine 139 provides a ligand contact to ergotamine. The DRY motif; important for ligand-induced conformation changes signature appears at aspartate 151–tyrosine 153. The Cytoplasmic portion of the chain corresponds to arginine 152 to serine 167. Residues arginine 168–isoleucine 189 traverse the membrane as a helical segment. The Extracellular portion of the chain corresponds to proline 190–asparagine 213. Leucine 209 is an ergotamine binding site. The helical transmembrane segment at phenylalanine 214 to leucine 236 threads the bilayer. Topologically, residues threonine 237 to lysine 311 are cytoplasmic. The disordered stretch occupies residues glutamate 274–glutamine 301. Residues arginine 287 to arginine 297 are compositionally biased toward basic residues. A helical transmembrane segment spans residues valine 312–leucine 336. The cysteines at positions 337 and 341 are disulfide-linked. Residues cysteine 337–glutamate 347 lie on the Extracellular side of the membrane. The helical transmembrane segment at lysine 348–leucine 370 threads the bilayer. The NPxxY motif; important for ligand-induced conformation changes and signaling motif lies at asparagine 364–tyrosine 368. Residues phenylalanine 371–valine 458 lie on the Cytoplasmic side of the membrane. Residues serine 456–valine 458 carry the PDZ-binding motif.

The protein belongs to the G-protein coupled receptor 1 family. Interacts with MPDZ. Interacts with ARRB2. Interacts with MPP3; this interaction stabilizes the receptor at the plasma membrane and prevents the desensitization of the HTR2C receptor-mediated calcium response.

It localises to the cell membrane. Functionally, G-protein coupled receptor for 5-hydroxytryptamine (serotonin). Also functions as a receptor for various drugs and psychoactive substances, including ergot alkaloid derivatives, 1-2,5,-dimethoxy-4-iodophenyl-2-aminopropane (DOI) and lysergic acid diethylamide (LSD). Ligand binding causes a conformation change that triggers signaling via guanine nucleotide-binding proteins (G proteins) and modulates the activity of downstream effectors. HTR2C is coupled to G(q)/G(11) G alpha proteins and activates phospholipase C-beta, releasing diacylglycerol (DAG) and inositol 1,4,5-trisphosphate (IP3) second messengers that modulate the activity of phosphatidylinositol 3-kinase and promote the release of Ca(2+) ions from intracellular stores, respectively. Beta-arrestin family members inhibit signaling via G proteins and mediate activation of alternative signaling pathways. Regulates neuronal activity via the activation of short transient receptor potential calcium channels in the brain, and thereby modulates the activation of pro-opiomelanocortin neurons and the release of CRH that then regulates the release of corticosterone. Plays a role in the regulation of appetite and eating behavior, responses to anxiogenic stimuli and stress. Plays a role in insulin sensitivity and glucose homeostasis. The chain is 5-hydroxytryptamine receptor 2C from Pan troglodytes (Chimpanzee).